The sequence spans 113 residues: Large ribosomal subunit protein uL22 (113 aa).

This sequence belongs to the universal ribosomal protein uL22 family. In terms of assembly, part of the 50S ribosomal subunit.

In terms of biological role, this protein binds specifically to 23S rRNA; its binding is stimulated by other ribosomal proteins, e.g. L4, L17, and L20. It is important during the early stages of 50S assembly. It makes multiple contacts with different domains of the 23S rRNA in the assembled 50S subunit and ribosome. Its function is as follows. The globular domain of the protein is located near the polypeptide exit tunnel on the outside of the subunit, while an extended beta-hairpin is found that lines the wall of the exit tunnel in the center of the 70S ribosome. In Roseiflexus castenholzii (strain DSM 13941 / HLO8), this protein is Large ribosomal subunit protein uL22.